We begin with the raw amino-acid sequence, 125 residues long: Large ribosomal subunit protein bL17 (125 aa).

This sequence belongs to the bacterial ribosomal protein bL17 family. In terms of assembly, part of the 50S ribosomal subunit. Contacts protein L32.

The chain is Large ribosomal subunit protein bL17 from Blochmanniella pennsylvanica (strain BPEN).